The primary structure comprises 125 residues: Translation initiation factor 5A (125 aa).

The residue at position 36 (lysine 36) is a Hypusine.

The protein belongs to the eIF-5A family.

The protein resides in the cytoplasm. Its function is as follows. Functions by promoting the formation of the first peptide bond. The sequence is that of Translation initiation factor 5A (eIF5A) from Halorubrum lacusprofundi (strain ATCC 49239 / DSM 5036 / JCM 8891 / ACAM 34).